Consider the following 396-residue polypeptide: Probable isocitrate dehydrogenase [NAD] gamma 2, mitochondrial (396 aa).

A mitochondrion-targeting transit peptide spans 1-25 (MLAVTSCSMKTVLQYAVFLGHSREV). T117 is a binding site for citrate. Substrate is bound by residues R133, R164, and D251. D251 serves as a coordination point for Mn(2+). Residue N321 coordinates ADP.

It belongs to the isocitrate and isopropylmalate dehydrogenases family. In terms of assembly, heterooligomer of subunits alpha (IDH3A), beta (IDH3B), and gamma (IDH3G) in the apparent ratio of 2:1:1. The heterodimer containing one IDH3A and one IDH3B subunit and the heterodimer containing one IDH3A and one IDH3G subunit assemble into a heterotetramer (which contains two subunits of IDH3A, one of IDH3B and one of IDH3G) and further into the heterooctamer. The cofactor is Mg(2+). Mn(2+) is required as a cofactor.

The protein resides in the mitochondrion. Its activity is regulated as follows. The heterotetramer and the heterodimer composed of IDH3A and IDH3G subunits can be allosterically activated by citrate (CIT) or/and ADP, and the two activators can act independently or synergistically. The heterodimer composed of IDH3A and IDH3B subunits cannot be allosterically regulated and the allosteric regulation of the heterotetramer is through the IDH3G subunit and not the IDH3B subunit. The IDH3G subunit contains the allosteric site which consists of a CIT-binding site and an ADP-binding site, and the binding of CIT and ADP causes conformational changes at the allosteric site which are transmitted to the active site in the catalytic subunit (IDH3A) through a cascade of conformational changes at the heterodimer interface, leading to stabilization of the isocitrate-binding at the active site and thus activation of the enzyme. ATP can activate the heterotetramer and the heterodimer composed of IDH3A and IDH3G subunits at low concentrations but inhibits their activities at high concentrations, whereas ATP exhibits only inhibitory effect on the heterodimer composed of IDH3A and IDH3B subunits. Regulatory subunit which plays a role in the allosteric regulation of the enzyme catalyzing the decarboxylation of isocitrate (ICT) into alpha-ketoglutarate. The heterodimer composed of the alpha (IDH3A) and beta (IDH3B) subunits and the heterodimer composed of the alpha (IDH3A) and gamma (IDH3G) subunits, have considerable basal activity but the full activity of the heterotetramer (containing two subunits of IDH3A, one of IDH3B and one of IDH3G) requires the assembly and cooperative function of both heterodimers. The chain is Probable isocitrate dehydrogenase [NAD] gamma 2, mitochondrial from Mus musculus (Mouse).